Reading from the N-terminus, the 291-residue chain is Diaminopimelate epimerase (291 aa).

Residues Asn-17, Gln-50, and Asn-70 each contribute to the substrate site. Residue Cys-79 is the Proton donor of the active site. Substrate-binding positions include 80–81 (GN), Asn-167, Asn-200, and 218–219 (ER). Residue Cys-227 is the Proton acceptor of the active site. 228 to 229 (GS) is a substrate binding site.

The protein belongs to the diaminopimelate epimerase family. Homodimer.

The protein resides in the cytoplasm. The catalysed reaction is (2S,6S)-2,6-diaminopimelate = meso-2,6-diaminopimelate. It participates in amino-acid biosynthesis; L-lysine biosynthesis via DAP pathway; DL-2,6-diaminopimelate from LL-2,6-diaminopimelate: step 1/1. Catalyzes the stereoinversion of LL-2,6-diaminopimelate (L,L-DAP) to meso-diaminopimelate (meso-DAP), a precursor of L-lysine and an essential component of the bacterial peptidoglycan. This chain is Diaminopimelate epimerase, found in Bradyrhizobium diazoefficiens (strain JCM 10833 / BCRC 13528 / IAM 13628 / NBRC 14792 / USDA 110).